The primary structure comprises 224 residues: DNA mismatch repair protein MutH (224 aa).

The protein belongs to the MutH family.

It localises to the cytoplasm. Its function is as follows. Sequence-specific endonuclease that cleaves unmethylated GATC sequences. It is involved in DNA mismatch repair. In Shewanella amazonensis (strain ATCC BAA-1098 / SB2B), this protein is DNA mismatch repair protein MutH.